We begin with the raw amino-acid sequence, 412 residues long: Tyrosine--tRNA ligase (412 aa).

The short motif at 56–65 is the 'HIGH' region element; that stretch reads PSAPDVHIGH. Positions 240–244 match the 'KMSKS' region motif; sequence KMSKS. ATP is bound at residue Lys-243. The region spanning 351-412 is the S4 RNA-binding domain; the sequence is VWIVDLLVTL…GKRKFKKLVR (62 aa).

It belongs to the class-I aminoacyl-tRNA synthetase family. TyrS type 2 subfamily. Homodimer.

Its subcellular location is the cytoplasm. The catalysed reaction is tRNA(Tyr) + L-tyrosine + ATP = L-tyrosyl-tRNA(Tyr) + AMP + diphosphate + H(+). In terms of biological role, catalyzes the attachment of tyrosine to tRNA(Tyr) in a two-step reaction: tyrosine is first activated by ATP to form Tyr-AMP and then transferred to the acceptor end of tRNA(Tyr). This chain is Tyrosine--tRNA ligase, found in Halalkalibacterium halodurans (strain ATCC BAA-125 / DSM 18197 / FERM 7344 / JCM 9153 / C-125) (Bacillus halodurans).